A 195-amino-acid polypeptide reads, in one-letter code: PRS fimbrial minor pilin protein (195 aa).

The first 22 residues, 1-22 (MRLRFSVPLFFFGCVFVHGVFA), serve as a signal peptide directing secretion. Cysteine 58 and cysteine 97 form a disulfide bridge.

It belongs to the fimbrial protein family.

Its subcellular location is the secreted. The protein localises to the fimbrium. Its function is as follows. Fimbriae (also called pili), polar filaments radiating from the surface of the bacterium to a length of 0.5-1.5 micrometers and numbering 100-300 per cell, enable bacteria to colonize the epithelium of specific host organs. Functionally, seems to anchor the pilus to the bacterial cell. In addition the stoichiometric relationship between PrsH and PrsA determines the pilus length. In Escherichia coli, this protein is PRS fimbrial minor pilin protein (prsH).